Reading from the N-terminus, the 420-residue chain is Putative competence-damage inducible protein (420 aa).

The protein belongs to the CinA family.

This chain is Putative competence-damage inducible protein, found in Halalkalibacterium halodurans (strain ATCC BAA-125 / DSM 18197 / FERM 7344 / JCM 9153 / C-125) (Bacillus halodurans).